We begin with the raw amino-acid sequence, 342 residues long: MAIERRRFLQAAGVGAVLGLSGCTGNTSPPQANNETAEGSGGSESGDGSTQELTLATTTSTYDTGLLDALNPVFEEKFNARVKTISQGTGAAIETARNGDADVILVHARGAEDEFLQDGYGVNRRDVMFNDFVVVGPADDPAGISGMESAADAFATVADAGATFVSRGDDSGTNKKELLIWEAAGVEPSGTWYREIGKGMGDTLVQADQSGAYTLSDRGTFLATQDNIDLEIQVQGPLKGGPTILKNPYGVIPVNPAKYPDVNYSLAMAYAGFLTSPEGQEIISNYTANGSQLFFPNALSENPQFGQYVPVNYDGGENASSSASVSDAQFESWVAQHVPEDF.

The tat-type signal signal peptide spans 1–32; it reads MAIERRRFLQAAGVGAVLGLSGCTGNTSPPQA. Residues 24–37 are compositionally biased toward polar residues; it reads TGNTSPPQANNETA. The tract at residues 24–52 is disordered; the sequence is TGNTSPPQANNETAEGSGGSESGDGSTQE.

The complex is composed of two ATP-binding proteins (HVO_1886), two transmembrane proteins (HVO_1887) and a solute-binding protein (HVO_1888). Post-translationally, predicted to be exported by the Tat system. The position of the signal peptide cleavage has not been experimentally proven.

Its function is as follows. Part of an ABC transporter complex involved in anions import. The sequence is that of Putative ABC transporter anion-binding protein HVO_1888 from Haloferax volcanii (strain ATCC 29605 / DSM 3757 / JCM 8879 / NBRC 14742 / NCIMB 2012 / VKM B-1768 / DS2) (Halobacterium volcanii).